Consider the following 119-residue polypeptide: Chorion class CA protein ERA.5 (119 aa).

The N-terminal stretch at 1 to 21 (MSTYTFVLFCLQICLIQNVYS) is a signal peptide. The left arm stretch occupies residues 22-55 (QCLGRVGPGGPPVGPYGGPLGGPGYGPVGYGGCG). A central domain region spans residues 56 to 103 (GYGGSGIGNVAVAGELPVAGSSAVMGQVPVIGAVEFAGPACAVGSVSI). Residues 104–119 (SGACGPTCGCGGSPYY) form a right arm region.

It belongs to the chorion protein family.

Functionally, this protein is one of many from the eggshell of the silk moth. In Bombyx mori (Silk moth), this protein is Chorion class CA protein ERA.5 (ERA.5).